Consider the following 368-residue polypeptide: Zinc finger protein 24 (368 aa).

Residue Lys-22 forms a Glycyl lysine isopeptide (Lys-Gly) (interchain with G-Cter in SUMO2) linkage. A Glycyl lysine isopeptide (Lys-Gly) (interchain with G-Cter in SUMO1); alternate cross-link involves residue Lys-27. A Glycyl lysine isopeptide (Lys-Gly) (interchain with G-Cter in SUMO2); alternate cross-link involves residue Lys-27. One can recognise an SCAN box domain in the interval Arg-52 to Leu-134. Residues Ser-132 and Ser-142 each carry the phosphoserine modification. Residues Lys-147, Lys-177, and Lys-236 each participate in a glycyl lysine isopeptide (Lys-Gly) (interchain with G-Cter in SUMO2) cross-link. The C2H2-type 1 zinc-finger motif lies at His-251 to His-273. A necessary and sufficient for nuclear localization region spans residues His-251–His-301. Ser-274 is subject to Phosphoserine. Residues Lys-277 and Lys-286 each participate in a glycyl lysine isopeptide (Lys-Gly) (interchain with G-Cter in SUMO2) cross-link. 3 C2H2-type zinc fingers span residues Tyr-279–His-301, Tyr-307–His-329, and Tyr-335–His-357. Ser-292 bears the Phosphoserine mark. The residue at position 335 (Tyr-335) is a Phosphotyrosine. Glycyl lysine isopeptide (Lys-Gly) (interchain with G-Cter in SUMO2) cross-links involve residues Lys-361 and Lys-367.

Belongs to the krueppel C2H2-type zinc-finger protein family. In terms of processing, sumoylated.

It is found in the nucleus. Functionally, transcription factor required for myelination of differentiated oligodendrocytes. Required for the conversion of oligodendrocytes from the premyelinating to the myelinating state. In the developing central nervous system (CNS), involved in the maintenance in the progenitor stage by promoting the cell cycle. Specifically binds to the 5'-TCAT-3' DNA sequence. Has transcription repressor activity in vitro. The sequence is that of Zinc finger protein 24 (Znf24) from Rattus norvegicus (Rat).